A 147-amino-acid polypeptide reads, in one-letter code: Antiholin-like protein LrgA (147 aa).

The next 4 membrane-spanning stretches (helical) occupy residues 12-32, 35-55, 74-94, and 98-118; these read PAHFFHQVIVIALVLFVSKII, FMPIPMPGSVIGLVLLFVLLC, NIGLLFVPAGISVVNSLGVIS, and FLIIGLIIVSTILLLICTGYV.

The protein belongs to the CidA/LrgA family. LrgA subfamily.

The protein localises to the cell membrane. In terms of biological role, inhibits the expression or activity of extracellular murein hydrolases by interacting, possibly with LrgB, with the holin-like proteins CidA and/or CidB. The LrgAB and CidAB proteins may affect the proton motive force of the membrane. May be involved in programmed cell death (PCD), possibly triggering PCD in response to antibiotics and environmental stresses. In Staphylococcus aureus (strain MSSA476), this protein is Antiholin-like protein LrgA.